Here is a 477-residue protein sequence, read N- to C-terminus: UDP-N-acetylmuramate--L-alanine ligase (477 aa).

118–124 (GTHGKTS) is an ATP binding site.

The protein belongs to the MurCDEF family.

The protein resides in the cytoplasm. The catalysed reaction is UDP-N-acetyl-alpha-D-muramate + L-alanine + ATP = UDP-N-acetyl-alpha-D-muramoyl-L-alanine + ADP + phosphate + H(+). The protein operates within cell wall biogenesis; peptidoglycan biosynthesis. In terms of biological role, cell wall formation. The chain is UDP-N-acetylmuramate--L-alanine ligase from Corynebacterium diphtheriae (strain ATCC 700971 / NCTC 13129 / Biotype gravis).